A 94-amino-acid chain; its full sequence is Integration host factor subunit beta (94 aa).

The protein belongs to the bacterial histone-like protein family. Heterodimer of an alpha and a beta chain.

In terms of biological role, this protein is one of the two subunits of integration host factor, a specific DNA-binding protein that functions in genetic recombination as well as in transcriptional and translational control. The sequence is that of Integration host factor subunit beta from Caulobacter sp. (strain K31).